Consider the following 306-residue polypeptide: Oxygen-dependent coproporphyrinogen-III oxidase (306 aa).

Residue serine 99 coordinates substrate. Positions 103 and 113 each coordinate a divalent metal cation. Histidine 113 acts as the Proton donor in catalysis. 115–117 (NVR) contributes to the substrate binding site. The a divalent metal cation site is built by histidine 152 and histidine 182. Residues 247–282 (YVEFNLVFDRGTLFGLQSGGRTESILMSMPPVANWR) form an important for dimerization region. 265–267 (GGR) contributes to the substrate binding site.

The protein belongs to the aerobic coproporphyrinogen-III oxidase family. In terms of assembly, homodimer. The cofactor is a divalent metal cation.

It localises to the cytoplasm. It carries out the reaction coproporphyrinogen III + O2 + 2 H(+) = protoporphyrinogen IX + 2 CO2 + 2 H2O. It participates in porphyrin-containing compound metabolism; protoporphyrin-IX biosynthesis; protoporphyrinogen-IX from coproporphyrinogen-III (O2 route): step 1/1. Its function is as follows. Involved in the heme biosynthesis. Catalyzes the aerobic oxidative decarboxylation of propionate groups of rings A and B of coproporphyrinogen-III to yield the vinyl groups in protoporphyrinogen-IX. This is Oxygen-dependent coproporphyrinogen-III oxidase from Burkholderia ambifaria (strain MC40-6).